We begin with the raw amino-acid sequence, 392 residues long: 8-amino-7-oxononanoate synthase (392 aa).

108–109 serves as a coordination point for pyridoxal 5'-phosphate; sequence GF. A substrate-binding site is contributed by His133. Pyridoxal 5'-phosphate is bound by residues Ser180, 205–208, and 236–239; these read DDAH and TLSK. Position 239 is an N6-(pyridoxal phosphate)lysine (Lys239). Thr353 lines the substrate pocket.

The protein belongs to the class-II pyridoxal-phosphate-dependent aminotransferase family. BioF subfamily. Homodimer. Pyridoxal 5'-phosphate serves as cofactor.

The catalysed reaction is 6-carboxyhexanoyl-[ACP] + L-alanine + H(+) = (8S)-8-amino-7-oxononanoate + holo-[ACP] + CO2. It participates in cofactor biosynthesis; biotin biosynthesis. Functionally, catalyzes the decarboxylative condensation of pimeloyl-[acyl-carrier protein] and L-alanine to produce 8-amino-7-oxononanoate (AON), [acyl-carrier protein], and carbon dioxide. In Bacillus pumilus (strain SAFR-032), this protein is 8-amino-7-oxononanoate synthase.